A 142-amino-acid chain; its full sequence is Large ribosomal subunit protein uL13 (142 aa).

Belongs to the universal ribosomal protein uL13 family. In terms of assembly, part of the 50S ribosomal subunit.

Functionally, this protein is one of the early assembly proteins of the 50S ribosomal subunit, although it is not seen to bind rRNA by itself. It is important during the early stages of 50S assembly. The protein is Large ribosomal subunit protein uL13 of Yersinia enterocolitica serotype O:8 / biotype 1B (strain NCTC 13174 / 8081).